Reading from the N-terminus, the 151-residue chain is Deoxyuridine 5'-triphosphate nucleotidohydrolase (151 aa).

Substrate contacts are provided by residues 70–72, N83, 87–89, and M97; these read RSG and LID.

It belongs to the dUTPase family. Requires Mg(2+) as cofactor.

It carries out the reaction dUTP + H2O = dUMP + diphosphate + H(+). Its pathway is pyrimidine metabolism; dUMP biosynthesis; dUMP from dCTP (dUTP route): step 2/2. Functionally, this enzyme is involved in nucleotide metabolism: it produces dUMP, the immediate precursor of thymidine nucleotides and it decreases the intracellular concentration of dUTP so that uracil cannot be incorporated into DNA. The polypeptide is Deoxyuridine 5'-triphosphate nucleotidohydrolase (Pseudomonas fluorescens (strain Pf0-1)).